We begin with the raw amino-acid sequence, 143 residues long: Small ribosomal subunit protein uS11c (143 aa).

This sequence belongs to the universal ribosomal protein uS11 family. In terms of assembly, part of the 30S ribosomal subunit.

Its subcellular location is the plastid. It is found in the chloroplast. This is Small ribosomal subunit protein uS11c from Saccharum officinarum (Sugarcane).